Reading from the N-terminus, the 663-residue chain is Polyunsaturated fatty acid lipoxygenase ALOX12 (663 aa).

The 113-residue stretch at 2–114 (GRYRVRVVTG…ILSLPEGTAR (113 aa)) folds into the PLAT domain. The Lipoxygenase domain occupies 115 to 663 (LAGDNALDVF…PSRIENSITI (549 aa)). A Phosphoserine modification is found at Ser-246. Positions 360, 365, 540, 544, and 663 each coordinate Fe cation.

It belongs to the lipoxygenase family. It depends on Fe cation as a cofactor. As to expression, found primarily in platelets and in microsomal and cytosolic fractions of the epidermis (at protein level).

It localises to the cytoplasm. Its subcellular location is the cytosol. It is found in the membrane. It catalyses the reaction (5Z,8Z,11Z,14Z)-eicosatetraenoate + O2 = (12S)-hydroperoxy-(5Z,8Z,10E,14Z)-eicosatetraenoate. The catalysed reaction is (9Z,12Z)-octadecadienoate + O2 = (13S)-hydroperoxy-(9Z,11E)-octadecadienoate. The enzyme catalyses 2 leukotriene A4 + O2 + 2 H2O = 2 lipoxin A4. It carries out the reaction 2 leukotriene A4 + O2 + 2 H2O = 2 lipoxin B4. It catalyses the reaction (5Z,8Z,11Z)-eicosatrienoate + O2 = (12S)-hydroperoxy-(5Z,8Z,10E)-eicosatrienoate. The catalysed reaction is (8Z,11Z,14Z)-eicosatrienoate + O2 = (12S)-hydroperoxy-(8Z,10E,14Z)-eicosatrienoate. The enzyme catalyses (4Z,7Z,10Z,13Z,16Z,19Z)-docosahexaenoate + O2 = (14S)-hydroperoxy-(4Z,7Z,10Z,12E,16Z,19Z)-docosahexaenoate. It carries out the reaction (7S)-hydroperoxy-(4Z,8E,10Z,13Z,16Z,19Z)-docosahexaenoate + O2 = (7S,14S)-dihydroperoxy-(4Z,8E,10Z,12E,16Z,19Z)-docosahexaenoate. It catalyses the reaction (7S)-hydroperoxy-(4Z,8E,10Z,13Z,16Z,19Z)-docosahexaenoate + O2 = (7S,17S)-dihydroperoxy-(4Z,8E,10Z,13Z,15E,19Z)-docosahexaenoate. The catalysed reaction is (14R,15S)-epoxy-(5Z,8Z,11Z)-eicosatrienoate + O2 = (12S)-hydroperoxy-(14R,15S)-epoxy-(5Z,8Z,10E)-eicosatrienoate. The enzyme catalyses (14S,15R)-epoxy-(5Z,8Z,11Z)-eicosatrienoate + O2 = (12S)-hydroperoxy-(14S,15R)-epoxy-(5Z,8Z,10E)-eicosatrienoate. It carries out the reaction (5Z,8Z,11Z,14Z)-eicosatetraenoate + O2 = (15S)-hydroperoxy-(5Z,8Z,11Z,13E)-eicosatetraenoate. It catalyses the reaction (14S)-hydroperoxy-(4Z,7Z,10Z,12E,16Z,19Z)-docosahexaenoate = (13S,14S)-epoxy-(4Z,7Z,9E,11E,16Z,19Z)-docosahexaenoate + H2O. The catalysed reaction is N-(5Z,8Z,11Z,14Z)-eicosatetraenoyl-L-alanine + O2 = N-(15S)-hydroperoxy-(5Z,8Z,11Z,13E)-eicosatetraenoyl-alanine. The enzyme catalyses N-(5Z,8Z,11Z,14Z)-eicosatetraenoyl-L-alanine + O2 = N-(12S)-hydroperoxy-(5Z,8Z,10E,14Z)-eicosatetraenoyl-alanine. It carries out the reaction N-(5Z,8Z,11Z,14Z)-eicosatetraenoyl-gamma-aminobutanoate + O2 = N-(15S)-hydroperoxy-(5Z,8Z,11Z,13E)-eicosatetraenoyl-gamma-aminobutanoate. It catalyses the reaction N-(5Z,8Z,11Z,14Z)-eicosatetraenoyl-gamma-aminobutanoate + O2 = N-(12S)-hydroperoxy-(5Z,8Z,10E,14Z)-eicosatetraenoyl-gamma-aminobutanoate. The catalysed reaction is N-(5Z,8Z,11Z,14Z)-eicosatetraenoyl-glycine + O2 = N-(15S)-hydroperoxy-(5Z,8Z,11Z,13E)-eicosatetraenoyl-glycine. The enzyme catalyses N-(5Z,8Z,11Z,14Z)-eicosatetraenoyl-glycine + O2 = N-(12S)-hydroperoxy-(5Z,8Z,10E,14Z)-eicosatetraenoyl-glycine. It carries out the reaction N-(5Z,8Z,11Z,14Z)-eicosatetraenoyl-taurine + O2 = N-(12S)-hydroperoxy-(5Z,8Z,10E,14Z)-eicosatetraenoyl-taurine. It catalyses the reaction N-(5Z,8Z,11Z,14Z)-eicosatetraenoyl-taurine + O2 = N-(15S)-hydroperoxy-(5Z,8Z,11Z,13E)-eicosatetraenoyl-taurine. The catalysed reaction is (5Z,8Z,11Z,14Z,17Z)-eicosapentaenoate + O2 = (12S)-hydroperoxy-(5Z,8Z,10E,14Z,17Z)-eicosapentaenoate. It participates in lipid metabolism; hydroperoxy eicosatetraenoic acid biosynthesis. With respect to regulation, activated by EGF. Arachidonic acid conversion is inhibited by (13S,14S)-epoxy-(4Z,7Z,9E,11E,16Z,19Z)-docosahexaenoate (13S,14S-epoxy-DHA). Arachidonate 12-lipoxygenase activity is decreased when PH decreases from 7.4 to 6. Functionally, catalyzes the regio and stereo-specific incorporation of molecular oxygen into free and esterified polyunsaturated fatty acids generating lipid hydroperoxides that can be further reduced to the corresponding hydroxy species. Mainly converts arachidonate ((5Z,8Z,11Z,14Z)-eicosatetraenoate) to the specific bioactive lipid (12S)-hydroperoxyeicosatetraenoate/(12S)-HPETE. Through the production of bioactive lipids like (12S)-HPETE it regulates different biological processes including platelet activation. It can also catalyze the epoxidation of double bonds of polyunsaturated fatty acids such as (14S)-hydroperoxy-docosahexaenoate/(14S)-HPDHA resulting in the formation of (13S,14S)-epoxy-DHA. Furthermore, it may participate in the sequential oxidations of DHA ((4Z,7Z,10Z,13Z,16Z,19Z)-docosahexaenoate) to generate specialized pro-resolving mediators (SPMs) like resolvin D5 ((7S,17S)-diHPDHA) and (7S,14S)-diHPDHA, that actively down-regulate the immune response and have anti-aggregation properties with platelets. An additional function involves a multistep process by which it transforms leukotriene A4/LTA4 into the bioactive lipids lipoxin A4/LXA4 and lipoxin B4/LXB4, both are vasoactive and LXA4 may regulate neutrophil function via occupancy of specific recognition sites. Can also peroxidize linoleate ((9Z,12Z)-octadecadienoate) to (13S)-hydroperoxyoctadecadienoate/ (13S-HPODE). Due to its role in regulating both the expression of the vascular endothelial growth factor (VEGF, an angiogenic factor involved in the survival and metastasis of solid tumors) and the expression of integrin beta-1 (known to affect tumor cell migration and proliferation), it can be regarded as protumorigenic. Important for cell survival, as it may play a role not only in proliferation but also in the prevention of apoptosis in vascular smooth muscle cells. The protein is Polyunsaturated fatty acid lipoxygenase ALOX12 (Alox12) of Mus musculus (Mouse).